Here is a 148-residue protein sequence, read N- to C-terminus: Snaclec B4 (148 aa).

The first 24 residues, 1–24, serve as a signal peptide directing secretion; sequence MGRIIFVSFGLLVVFLSLSGTGAA. Cystine bridges form between cysteine 27–cysteine 38, cysteine 55–cysteine 144, and cysteine 121–cysteine 136. Residues 34–145 form the C-type lectin domain; sequence YDQHCYKVFD…CRLLGHFVCK (112 aa).

The protein belongs to the snaclec family. As to quaternary structure, heterodimer; disulfide-linked. As to expression, expressed by the venom gland.

Its subcellular location is the secreted. Interferes with one step of hemostasis (modulation of platelet aggregation, or coagulation cascade, for example). This Macrovipera lebetinus (Levantine viper) protein is Snaclec B4.